The primary structure comprises 194 residues: Large ribosomal subunit protein bL9 (194 aa).

Over residues 156–167 the composition is skewed to basic and acidic residues; sequence RGEDISSRREDQ. Residues 156–194 are disordered; that stretch reads RGEDISSRREDQDAAAEAIAAAGEFFDPDAQQDEEPEQQ. A compositionally biased stretch (acidic residues) spans 181–194; the sequence is FDPDAQQDEEPEQQ.

Belongs to the bacterial ribosomal protein bL9 family.

Functionally, binds to the 23S rRNA. This is Large ribosomal subunit protein bL9 from Rhodopseudomonas palustris (strain BisB5).